A 230-amino-acid polypeptide reads, in one-letter code: Ubiquitin carboxyl-terminal hydrolase isozyme L3 (230 aa).

Residues 5–229 (RWLPLEANPE…LRFNAIALSA (225 aa)) enclose the UCH catalytic domain. The segment at 8–13 (PLEANP) is interaction with ubiquitin. C95 functions as the Nucleophile in the catalytic mechanism. At S130 the chain carries Phosphoserine. The segment at 152–159 (AHEGQTEA) is interaction with ubiquitin. Crossover loop which restricts access of large ubiquitin adducts to the active site. The active-site Proton donor is H169. The tract at residues 219-224 (ELRFNA) is interaction with ubiquitin.

Belongs to the peptidase C12 family. In terms of assembly, preferentially binds diubiquitin; the interaction does not hydrolyze diubiquitin but, in vitro, inhibits the hydrolyzing activity on other substrates.

The protein localises to the cytoplasm. The enzyme catalyses Thiol-dependent hydrolysis of ester, thioester, amide, peptide and isopeptide bonds formed by the C-terminal Gly of ubiquitin (a 76-residue protein attached to proteins as an intracellular targeting signal).. Inhibited by monoubiquitin and diubiquitin. Functionally, deubiquitinating enzyme (DUB) that controls levels of cellular ubiquitin through processing of ubiquitin precursors and ubiquitinated proteins. Thiol protease that recognizes and hydrolyzes a peptide bond at the C-terminal glycine of either ubiquitin or NEDD8. Has a 10-fold preference for Arg and Lys at position P3''. Deubiquitinates ENAC in apical compartments, thereby regulating apical membrane recycling. Indirectly increases the phosphorylation of IGFIR, AKT and FOXO1 and promotes insulin-signaling and insulin-induced adipogenesis. Required for stress-response retinal, skeletal muscle and germ cell maintenance. May be involved in working memory. Can hydrolyze UBB(+1), a mutated form of ubiquitin which is not effectively degraded by the proteasome. The sequence is that of Ubiquitin carboxyl-terminal hydrolase isozyme L3 (UCHL3) from Bos taurus (Bovine).